Consider the following 600-residue polypeptide: Chaperonin 60 subunit beta 1, chloroplastic (600 aa).

Over residues 1–12 (MASTFTATSSIG) the composition is skewed to polar residues. The interval 1 to 23 (MASTFTATSSIGSMVAPNGHKSD) is disordered. The N-terminal 54 residues, 1 to 54 (MASTFTATSSIGSMVAPNGHKSDKKLISKLSSSSFGRRQSVCPRPRRSSSAIVC), are a transit peptide targeting the chloroplast. A phosphoserine mark is found at S101 and S478.

Belongs to the chaperonin (HSP60) family. As to quaternary structure, part of the Cpn60 complex composed of 7 alpha and 7 beta subunits. Can also form a complex composed of 14 beta subunits only. Both complexes show ATPase activity. The Cpn60 complex interacts with the Cpn10 complex. Interacts with RAB during heat stress. As to expression, expressed in leaves, stems, petioles and flowers.

The protein localises to the plastid. Its subcellular location is the chloroplast stroma. Its function is as follows. Binds RuBisCO small and large subunits and is implicated in the assembly of the enzyme oligomer. Involved in protein assisted folding. Required for proper plastid division. The protein is Chaperonin 60 subunit beta 1, chloroplastic (CPN60B1) of Arabidopsis thaliana (Mouse-ear cress).